A 142-amino-acid chain; its full sequence is Large ribosomal subunit protein uL13 (142 aa).

The protein belongs to the universal ribosomal protein uL13 family. As to quaternary structure, part of the 50S ribosomal subunit.

In terms of biological role, this protein is one of the early assembly proteins of the 50S ribosomal subunit, although it is not seen to bind rRNA by itself. It is important during the early stages of 50S assembly. The chain is Large ribosomal subunit protein uL13 from Tolumonas auensis (strain DSM 9187 / NBRC 110442 / TA 4).